The chain runs to 54 residues: Chymosin (54 aa).

The propeptide at 1-27 is activation peptide; that stretch reads SEITRVPLHKGKSLRKALKEHGLLEBF.

The protein belongs to the peptidase A1 family. In terms of assembly, monomer.

It carries out the reaction Broad specificity similar to that of pepsin A. Clots milk by cleavage of a single 104-Ser-Phe-|-Met-Ala-107 bond in kappa-chain of casein.. Functionally, chymosin is synthesized in the mucosa of the stomach. The enzyme hydrolyzes casein to paracasein. This chain is Chymosin (CYM), found in Felis catus (Cat).